A 570-amino-acid polypeptide reads, in one-letter code: Formate--tetrahydrofolate ligase (570 aa).

Residue 65–72 (TPYGEGKT) participates in ATP binding.

It belongs to the formate--tetrahydrofolate ligase family.

The catalysed reaction is (6S)-5,6,7,8-tetrahydrofolate + formate + ATP = (6R)-10-formyltetrahydrofolate + ADP + phosphate. The protein operates within one-carbon metabolism; tetrahydrofolate interconversion. In Shewanella piezotolerans (strain WP3 / JCM 13877), this protein is Formate--tetrahydrofolate ligase.